The following is a 130-amino-acid chain: Small ribosomal subunit protein uS11 (130 aa).

Belongs to the universal ribosomal protein uS11 family. In terms of assembly, part of the 30S ribosomal subunit. Interacts with proteins S7 and S18. Binds to IF-3.

In terms of biological role, located on the platform of the 30S subunit, it bridges several disparate RNA helices of the 16S rRNA. Forms part of the Shine-Dalgarno cleft in the 70S ribosome. The chain is Small ribosomal subunit protein uS11 from Phytoplasma mali (strain AT).